A 249-amino-acid chain; its full sequence is Eukaryotic translation initiation factor 3 subunit K (249 aa).

The PCI domain occupies F46–E222.

Belongs to the eIF-3 subunit K family. As to quaternary structure, component of the eukaryotic translation initiation factor 3 (eIF-3) complex.

Its subcellular location is the cytoplasm. Functionally, component of the eukaryotic translation initiation factor 3 (eIF-3) complex, which is involved in protein synthesis of a specialized repertoire of mRNAs and, together with other initiation factors, stimulates binding of mRNA and methionyl-tRNAi to the 40S ribosome. The eIF-3 complex specifically targets and initiates translation of a subset of mRNAs involved in cell proliferation. This is Eukaryotic translation initiation factor 3 subunit K from Aspergillus fumigatus (strain CBS 144.89 / FGSC A1163 / CEA10) (Neosartorya fumigata).